The sequence spans 291 residues: ATP phosphoribosyltransferase (291 aa).

This sequence belongs to the ATP phosphoribosyltransferase family. Long subfamily. Mg(2+) is required as a cofactor.

Its subcellular location is the cytoplasm. It catalyses the reaction 1-(5-phospho-beta-D-ribosyl)-ATP + diphosphate = 5-phospho-alpha-D-ribose 1-diphosphate + ATP. It functions in the pathway amino-acid biosynthesis; L-histidine biosynthesis; L-histidine from 5-phospho-alpha-D-ribose 1-diphosphate: step 1/9. Feedback inhibited by histidine. Functionally, catalyzes the condensation of ATP and 5-phosphoribose 1-diphosphate to form N'-(5'-phosphoribosyl)-ATP (PR-ATP). Has a crucial role in the pathway because the rate of histidine biosynthesis seems to be controlled primarily by regulation of HisG enzymatic activity. This chain is ATP phosphoribosyltransferase, found in Trichlorobacter lovleyi (strain ATCC BAA-1151 / DSM 17278 / SZ) (Geobacter lovleyi).